Reading from the N-terminus, the 373-residue chain is tRNA-specific 2-thiouridylase MnmA (373 aa).

ATP-binding positions include 12–19 (GMSGGVDS) and Met-38. The segment at 98–100 (NPD) is interaction with target base in tRNA. Cys-103 functions as the Nucleophile in the catalytic mechanism. The cysteines at positions 103 and 200 are disulfide-linked. Gly-127 is an ATP binding site. Positions 150 to 152 (KDQ) are interaction with tRNA. Cys-200 (cysteine persulfide intermediate) is an active-site residue. Residues 312-313 (RY) form an interaction with tRNA region.

It belongs to the MnmA/TRMU family.

The protein resides in the cytoplasm. It catalyses the reaction S-sulfanyl-L-cysteinyl-[protein] + uridine(34) in tRNA + AH2 + ATP = 2-thiouridine(34) in tRNA + L-cysteinyl-[protein] + A + AMP + diphosphate + H(+). Its function is as follows. Catalyzes the 2-thiolation of uridine at the wobble position (U34) of tRNA, leading to the formation of s(2)U34. The chain is tRNA-specific 2-thiouridylase MnmA from Streptococcus pneumoniae (strain 70585).